The following is a 579-amino-acid chain: Aspartate--tRNA(Asp/Asn) ligase (579 aa).

Residue Glu-171 coordinates L-aspartate. Residues 195-198 (QLFK) are aspartate. Arg-217 lines the L-aspartate pocket. Residues 217-219 (RDE) and Gln-226 contribute to the ATP site. His-444 is an L-aspartate binding site. Glu-475 is an ATP binding site. Arg-482 serves as a coordination point for L-aspartate. 527–530 (GLDR) is a binding site for ATP.

It belongs to the class-II aminoacyl-tRNA synthetase family. Type 1 subfamily. Homodimer.

Its subcellular location is the cytoplasm. It catalyses the reaction tRNA(Asx) + L-aspartate + ATP = L-aspartyl-tRNA(Asx) + AMP + diphosphate. Its function is as follows. Aspartyl-tRNA synthetase with relaxed tRNA specificity since it is able to aspartylate not only its cognate tRNA(Asp) but also tRNA(Asn). Reaction proceeds in two steps: L-aspartate is first activated by ATP to form Asp-AMP and then transferred to the acceptor end of tRNA(Asp/Asn). The sequence is that of Aspartate--tRNA(Asp/Asn) ligase from Thermotoga neapolitana (strain ATCC 49049 / DSM 4359 / NBRC 107923 / NS-E).